The primary structure comprises 89 residues: Defensin-like protein 147 (89 aa).

Residues 1 to 24 (MKKIFQLSFTVFIIFISLVLGVVG) form the signal peptide. 4 disulfide bridges follow: Cys34-Cys82, Cys46-Cys66, Cys51-Cys79, and Cys55-Cys81.

It belongs to the DEFL family. In terms of tissue distribution, expressed in flower buds, but not in stems, roots or rosette leaves.

It localises to the secreted. The polypeptide is Defensin-like protein 147 (LCR1) (Arabidopsis thaliana (Mouse-ear cress)).